We begin with the raw amino-acid sequence, 157 residues long: MLGHFKKATTAPKRFIKEINFSADVNSNLANLAVGALITNDLFQVGDLVDVTGTSKGKGFAGSIKRHNQSRGPESHGSRYHRRPGSMGPIKGKLKGKKLPGHMGHETVTIQNLAILSVDTEKNLFLIKGNVPGPNKGFVIIKSAVKKLTKEQTHAKN.

A disordered region spans residues 57-98 (GKGFAGSIKRHNQSRGPESHGSRYHRRPGSMGPIKGKLKGKK).

This sequence belongs to the universal ribosomal protein uL3 family. In terms of assembly, part of the 50S ribosomal subunit. Forms a cluster with proteins L14 and L19.

In terms of biological role, one of the primary rRNA binding proteins, it binds directly near the 3'-end of the 23S rRNA, where it nucleates assembly of the 50S subunit. The polypeptide is Large ribosomal subunit protein uL3 (rplC) (Onion yellows phytoplasma (strain OY-M)).